The following is a 103-amino-acid chain: UPF0145 protein BLi01945/BL05168 (103 aa).

This sequence belongs to the UPF0145 family.

This Bacillus licheniformis (strain ATCC 14580 / DSM 13 / JCM 2505 / CCUG 7422 / NBRC 12200 / NCIMB 9375 / NCTC 10341 / NRRL NRS-1264 / Gibson 46) protein is UPF0145 protein BLi01945/BL05168.